Here is a 295-residue protein sequence, read N- to C-terminus: 4-hydroxy-tetrahydrodipicolinate synthase (295 aa).

T47 contributes to the pyruvate binding site. Catalysis depends on Y135, which acts as the Proton donor/acceptor. The Schiff-base intermediate with substrate role is filled by K163. Position 206 (I206) interacts with pyruvate.

Homodimer. In fact, exists in a monomer-dimer equilibrium in solution, shifted in favor of the dimer in presence of the substrate pyruvate; the monomer has significantly reduced activity compared with the dimer.

It localises to the cytoplasm. The enzyme catalyses L-aspartate 4-semialdehyde + pyruvate = (2S,4S)-4-hydroxy-2,3,4,5-tetrahydrodipicolinate + H2O + H(+). Its pathway is amino-acid biosynthesis; L-lysine biosynthesis via DAP pathway; (S)-tetrahydrodipicolinate from L-aspartate: step 3/4. With respect to regulation, is insensitive to lysine-feedback inhibition. Shows ASA substrate inhibition. In terms of biological role, catalyzes the condensation of (S)-aspartate-beta-semialdehyde [(S)-ASA] and pyruvate to 4-hydroxy-tetrahydrodipicolinate (HTPA). The sequence is that of 4-hydroxy-tetrahydrodipicolinate synthase from Staphylococcus aureus (strain MRSA252).